A 190-amino-acid chain; its full sequence is Endoribonuclease YbeY (190 aa).

The tract at residues 1–20 (MDVENDRPPRRGAAGERNSG) is disordered. Zn(2+) contacts are provided by H147, H151, and H157.

It belongs to the endoribonuclease YbeY family. It depends on Zn(2+) as a cofactor.

Its subcellular location is the cytoplasm. In terms of biological role, single strand-specific metallo-endoribonuclease involved in late-stage 70S ribosome quality control and in maturation of the 3' terminus of the 16S rRNA. This Nitrobacter hamburgensis (strain DSM 10229 / NCIMB 13809 / X14) protein is Endoribonuclease YbeY.